A 101-amino-acid polypeptide reads, in one-letter code: Small ribosomal subunit protein uS14 (101 aa).

It belongs to the universal ribosomal protein uS14 family. As to quaternary structure, part of the 30S ribosomal subunit. Contacts proteins S3 and S10.

Binds 16S rRNA, required for the assembly of 30S particles and may also be responsible for determining the conformation of the 16S rRNA at the A site. This Francisella tularensis subsp. novicida (strain U112) protein is Small ribosomal subunit protein uS14.